The chain runs to 869 residues: Ubiquitin carboxyl-terminal hydrolase 29 (869 aa).

2 stretches are compositionally biased toward polar residues: residues 104-120 (SSTP…MSSQ) and 140-150 (SLNTTPESGTP). The interval 104 to 226 (SSTPCESQQP…KAVTLREQEK (123 aa)) is disordered. Residues 187 to 200 (VNKDIPKENTPDQK) are compositionally biased toward basic and acidic residues. The span at 201–212 (KKSRRYYSRNRG) shows a compositional bias: basic residues. Positions 213–226 (GKAEKAVTLREQEK) are enriched in basic and acidic residues. In terms of domain architecture, USP spans 289–826 (EGFPNLGNTC…SGYIFFYMHN (538 aa)). The active-site Nucleophile is Cys-298. The segment at 723–754 (SQEDPEKDLSRSPELQEDDPHSFAFGSDDSKD) is disordered. His-781 (proton acceptor) is an active-site residue.

Belongs to the peptidase C19 family. Predominantly expressed in brain and testis. Highest expression levels in adult brain, especially in the cerebral cortex and hippocampus, and in the forebrain, face, and limb buds of midgestation mouse embryos.

It localises to the cytoplasm. It is found in the perinuclear region. It carries out the reaction Thiol-dependent hydrolysis of ester, thioester, amide, peptide and isopeptide bonds formed by the C-terminal Gly of ubiquitin (a 76-residue protein attached to proteins as an intracellular targeting signal).. In terms of biological role, deubiquitinase involved in innate antiviral immunity by mediating 'Lys-48'-linked deubiquitination of CGAS, thereby promoting its stabilization. In Mus musculus (Mouse), this protein is Ubiquitin carboxyl-terminal hydrolase 29.